A 201-amino-acid polypeptide reads, in one-letter code: Probable nicotinate-nucleotide adenylyltransferase (201 aa).

The interval 182 to 201 (GPESSQSATSIRERGGWSLR) is disordered. Basic and acidic residues predominate over residues 192-201 (IRERGGWSLR).

Belongs to the NadD family.

It catalyses the reaction nicotinate beta-D-ribonucleotide + ATP + H(+) = deamido-NAD(+) + diphosphate. It participates in cofactor biosynthesis; NAD(+) biosynthesis; deamido-NAD(+) from nicotinate D-ribonucleotide: step 1/1. Catalyzes the reversible adenylation of nicotinate mononucleotide (NaMN) to nicotinic acid adenine dinucleotide (NaAD). The protein is Probable nicotinate-nucleotide adenylyltransferase of Parvibaculum lavamentivorans (strain DS-1 / DSM 13023 / NCIMB 13966).